The following is a 764-amino-acid chain: MAATLKSLKLLRYQAFCSPSAFGAVRSVSYWNASSTQHGGQDPPGHISLCHSAKKVKNICSTFSSRRIPTTSSARPGLEFSKTSSSKASTLQLGSPRATGIDEENVEVFDSFENLRVFLQLRPEYRVHSYSASETSQLLSVSEGELILHKVRVNQNNLQAQVIVDYLCKLSSLPAEQHPVLLGSTSFALLCQLSVRKIKLFDTQDLINVLKAFVILGIPHSHSMLDVYETKCCHQVWEMSVDQLLLVADLWRYIGRKVPRFLNICCSYLNLRWKDLSLSQLVHLIYVIGENRQVSQDLMQKLESLILKYIDLINLEEVGTICLGFFKSKTNLSEFVMRKIGDLACADMQHLSSHSLVNIVKMFRFTHVDHINFMKQIGEIAPQRIPSLGVQGVMHLTLYCSALRFLDEGVMNAVAASLPPRVAQCRSKDVAKILWSFGTLNYKPPNAEEFYSSLINEIHRKMPEFNQYPEHLPTCLLGLAFLEYFPVELIDFALSPGFVRLAQERTKFDLIKELYTLDGTVVIECPDYRGNRLSTHLQREGSELLWYLAEKDMNSKPEFLETVFLLETMLGGPQYVKHHMILPHTRSSDLEVQLDVNLKPLPFNREATPAENVAKLKCEHVGVSLTDDLMNQLLKGKARGHFQGKTESEPGQQHMELENKAAVPLGGSLRNVADKSGAMEMAGLCPPACMQTPRMKLAIQFTNRNQYCYGSRDLLGLHNMKRRQLARLGYRVVELSYWEWLPLLKRTRLEKLAFLHEKVFTSAL.

The N-terminal 27 residues, 1–27 (MAATLKSLKLLRYQAFCSPSAFGAVRS), are a transit peptide targeting the mitochondrion. A disordered region spans residues 68–94 (IPTTSSARPGLEFSKTSSSKASTLQLG). The segment covering 81-93 (SKTSSSKASTLQL) has biased composition (polar residues). The residue at position 95 (serine 95) is a Phosphoserine. Residue lysine 507 is modified to N6-acetyllysine. The region spanning 697 to 757 (LAIQFTNRNQ…RLEKLAFLHE (61 aa)) is the RAP domain.

This sequence belongs to the FAST kinase family. In terms of assembly, found in a complex with GRSF1, DDX28, DHX30 and FASTKD2. Associates with the 12S mitochondrial rRNA (12S mt-rRNA).

It localises to the mitochondrion matrix. The protein localises to the mitochondrion nucleoid. Its function is as follows. Plays an important role in the processing of non-canonical mitochondrial mRNA precursors. The chain is FAST kinase domain-containing protein 5, mitochondrial (FASTKD5) from Pongo abelii (Sumatran orangutan).